The chain runs to 136 residues: Peptide methionine sulfoxide reductase B5 (136 aa).

The region spanning 14-135 is the MsrB domain; the sequence is DEEWRAVLSP…NSVSIKFTPA (122 aa). Zn(2+)-binding residues include C53, C56, C99, and C102. C71 and C124 form a disulfide bridge. The active-site Nucleophile is C124.

This sequence belongs to the MsrB Met sulfoxide reductase family. It depends on Zn(2+) as a cofactor.

Its subcellular location is the cytoplasm. The protein resides in the cytosol. The catalysed reaction is L-methionyl-[protein] + [thioredoxin]-disulfide + H2O = L-methionyl-(R)-S-oxide-[protein] + [thioredoxin]-dithiol. In terms of biological role, catalyzes the reduction of methionine sulfoxide (MetSO) to methionine in proteins. Plays a protective role against oxidative stress by restoring activity to proteins that have been inactivated by methionine oxidation. MSRB family specifically reduces the MetSO R-enantiomer. In Oryza sativa subsp. japonica (Rice), this protein is Peptide methionine sulfoxide reductase B5 (MSRB5).